Reading from the N-terminus, the 888-residue chain is Alanine--tRNA ligase (888 aa).

Residues histidine 570, histidine 574, cysteine 673, and histidine 677 each contribute to the Zn(2+) site.

The protein belongs to the class-II aminoacyl-tRNA synthetase family. Requires Zn(2+) as cofactor.

It is found in the cytoplasm. It carries out the reaction tRNA(Ala) + L-alanine + ATP = L-alanyl-tRNA(Ala) + AMP + diphosphate. In terms of biological role, catalyzes the attachment of alanine to tRNA(Ala) in a two-step reaction: alanine is first activated by ATP to form Ala-AMP and then transferred to the acceptor end of tRNA(Ala). Also edits incorrectly charged Ser-tRNA(Ala) and Gly-tRNA(Ala) via its editing domain. In Chlorobium phaeobacteroides (strain DSM 266 / SMG 266 / 2430), this protein is Alanine--tRNA ligase.